Reading from the N-terminus, the 300-residue chain is Actin-related protein 2/3 complex subunit 2 (300 aa).

2 positions are modified to N6-acetyllysine: lysine 275 and lysine 295.

The protein belongs to the ARPC2 family. In terms of assembly, component of the Arp2/3 complex composed of ACTR2/ARP2, ACTR3/ARP3, ARPC1B/p41-ARC, ARPC2/p34-ARC, ARPC3/p21-ARC, ARPC4/p20-ARC and ARPC5/p16-ARC. Interacts with SHANK3; the interaction probably mediates the association of SHANK3 with the Arp2/3 complex.

Its subcellular location is the cytoplasm. It is found in the cytoskeleton. It localises to the cell projection. The protein localises to the synapse. The protein resides in the synaptosome. Its subcellular location is the nucleus. Actin-binding component of the Arp2/3 complex, a multiprotein complex that mediates actin polymerization upon stimulation by nucleation-promoting factor (NPF). The Arp2/3 complex mediates the formation of branched actin networks in the cytoplasm, providing the force for cell motility. Seems to contact the mother actin filament. In addition to its role in the cytoplasmic cytoskeleton, the Arp2/3 complex also promotes actin polymerization in the nucleus, thereby regulating gene transcription and repair of damaged DNA. The Arp2/3 complex promotes homologous recombination (HR) repair in response to DNA damage by promoting nuclear actin polymerization, leading to drive motility of double-strand breaks (DSBs). The protein is Actin-related protein 2/3 complex subunit 2 of Rattus norvegicus (Rat).